The primary structure comprises 862 residues: Rab GTPase-binding effector protein 1 (862 aa).

Residue Ala2 is modified to N-acetylalanine. Residues 11-345 adopt a coiled-coil conformation; sequence DVSLQQRVAE…KKADVEEEIK (335 aa). Lys282 is subject to N6-acetyllysine. Residues 315–338 form a disordered region; sequence ELKKKDQEDDEQQRLNKRKDHKKA. 3 positions are modified to phosphoserine: Ser374, Ser377, and Ser407. Thr408 carries the post-translational modification Phosphothreonine. A Phosphoserine modification is found at Ser410. Residues 435-447 are interaction with AP1G1, AP1G2, GGA1, GGA2 and GGA3; it reads DESDFGPLVGADS. A coiled-coil region spans residues 534 to 816; sequence DMCSNYEKQL…LQTELDVSEQ (283 aa).

It belongs to the rabaptin family. In terms of assembly, homodimer when bound to RAB5A. Heterodimer with RABGEF1. The heterodimer binds RAB4A and RAB5A that have been activated by GTP-binding. Interacts with TSC2. Interacts with GGA1 (via GAE domain), GGA2 (via GAE domain) and GGA3 (via GAE domain). Interacts with AP1G1 (via GAE domain). Interacts with AP1G2 (via GAE domain). Interacts with ECPAS. Interacts with KCNH1. Interacts with PKD1 (via C-terminal domain) and GGA1; the interactions recruit PKD1:PKD2 complex to GGA1 and ARL3 at trans-Golgi network. In terms of processing, proteolytic cleavage by caspases in apoptotic cells causes loss of endosome fusion activity.

Its subcellular location is the cytoplasm. It localises to the early endosome. It is found in the recycling endosome. The protein resides in the cytoplasmic vesicle. Rab effector protein acting as linker between gamma-adaptin, RAB4A and RAB5A. Involved in endocytic membrane fusion and membrane trafficking of recycling endosomes. Involved in KCNH1 channels trafficking to and from the cell membrane. Stimulates RABGEF1 mediated nucleotide exchange on RAB5A. Mediates the traffic of PKD1:PKD2 complex from the endoplasmic reticulum through the Golgi to the cilium. In Homo sapiens (Human), this protein is Rab GTPase-binding effector protein 1 (RABEP1).